The following is a 197-amino-acid chain: Baseplate puncturing device gp45 (197 aa).

Positions 172-197 are disordered; that stretch reads DAIINGKSTDKHIHRGDSGGTTGPMQ. Positions 179–188 are enriched in basic and acidic residues; sequence STDKHIHRGD. His183 and His185 together coordinate Fe cation. Ca(2+) is bound by residues Asp188 and Ser189. Residue Asp188 coordinates chloride.

Homotrimer. Part of a complex composed of three DNA circularization protein N, three baseplate hub protein gp44 and three sub-complex wedge (made of two copies of each baseplate protein gp46, gp47 and gp48) that forms the baseplate. Ca(2+) is required as a cofactor. It depends on chloride as a cofactor. Requires Fe cation as cofactor.

Its subcellular location is the virion. It localises to the host cytoplasm. Its function is as follows. Component of the baseplate that forms a central needlelike spike used to puncture the host cell membrane for tube insertion during virus entry. Probably involved in baseplate and tail assembly. Serves as the distal plug of tail tube channel and might regulate the process of the phage DNA and protein ejection into the host cell. The sequence is that of Baseplate puncturing device gp45 from Escherichia phage Mu (Bacteriophage Mu).